We begin with the raw amino-acid sequence, 455 residues long: Argininosuccinate lyase (455 aa).

This sequence belongs to the lyase 1 family. Argininosuccinate lyase subfamily.

The protein resides in the cytoplasm. It carries out the reaction 2-(N(omega)-L-arginino)succinate = fumarate + L-arginine. It functions in the pathway amino-acid biosynthesis; L-arginine biosynthesis; L-arginine from L-ornithine and carbamoyl phosphate: step 3/3. This Roseiflexus castenholzii (strain DSM 13941 / HLO8) protein is Argininosuccinate lyase.